The primary structure comprises 98 residues: NADH-ubiquinone oxidoreductase chain 4L (98 aa).

The next 3 membrane-spanning stretches (helical) occupy residues 1-21, 29-49, and 61-81; these read MTLV…GLLM, SLLC…VTIL, and IILL…LVMV.

It belongs to the complex I subunit 4L family. Core subunit of respiratory chain NADH dehydrogenase (Complex I) which is composed of 45 different subunits.

It is found in the mitochondrion inner membrane. The enzyme catalyses a ubiquinone + NADH + 5 H(+)(in) = a ubiquinol + NAD(+) + 4 H(+)(out). Its function is as follows. Core subunit of the mitochondrial membrane respiratory chain NADH dehydrogenase (Complex I) which catalyzes electron transfer from NADH through the respiratory chain, using ubiquinone as an electron acceptor. Part of the enzyme membrane arm which is embedded in the lipid bilayer and involved in proton translocation. This chain is NADH-ubiquinone oxidoreductase chain 4L (MT-ND4L), found in Rousettus aegyptiacus (Egyptian fruit bat).